Consider the following 638-residue polypeptide: Eukaryotic translation initiation factor 2A (638 aa).

WD repeat units follow at residues 287–329 and 331–370; these read SKEG…FDFG and GPRN…KLAN. Over residues 441–450 the composition is skewed to basic and acidic residues; that stretch reads KITKAKHEGI. The segment at 441-593 is disordered; that stretch reads KITKAKHEGI…SDKERKIRSV (153 aa). Thr-463 is subject to Phosphothreonine. Positions 492-501 are enriched in low complexity; the sequence is AAAGGVNGNK. A compositionally biased stretch (basic and acidic residues) spans 583–593; that stretch reads ISDKERKIRSV.

The protein belongs to the WD repeat EIF2A family.

Its function is as follows. Functions in the early steps of protein synthesis of a small number of specific mRNAs. Acts by directing the binding of methionyl-tRNAi to 40S ribosomal subunits. In contrast to the eIF-2 complex, it binds methionyl-tRNAi to 40S subunits in a codon-dependent manner, whereas the eIF-2 complex binds methionyl-tRNAi to 40S subunits in a GTP-dependent manner. This Drosophila melanogaster (Fruit fly) protein is Eukaryotic translation initiation factor 2A.